A 398-amino-acid chain; its full sequence is 1-deoxy-D-xylulose 5-phosphate reductoisomerase (398 aa).

The NADPH site is built by Thr-10, Gly-11, Ser-12, Ile-13, Gly-36, Arg-37, Asn-38, and Asn-124. A 1-deoxy-D-xylulose 5-phosphate-binding site is contributed by Lys-125. Glu-126 contacts NADPH. Asp-150 is a binding site for Mn(2+). Residues Ser-151, Glu-152, Ser-186, and His-209 each contribute to the 1-deoxy-D-xylulose 5-phosphate site. Residue Glu-152 coordinates Mn(2+). NADPH is bound at residue Gly-215. The 1-deoxy-D-xylulose 5-phosphate site is built by Ser-222, Asn-227, Lys-228, and Glu-231. Mn(2+) is bound at residue Glu-231.

Belongs to the DXR family. As to quaternary structure, homodimer. Mg(2+) is required as a cofactor. The cofactor is Mn(2+).

It catalyses the reaction 2-C-methyl-D-erythritol 4-phosphate + NADP(+) = 1-deoxy-D-xylulose 5-phosphate + NADPH + H(+). Its pathway is isoprenoid biosynthesis; isopentenyl diphosphate biosynthesis via DXP pathway; isopentenyl diphosphate from 1-deoxy-D-xylulose 5-phosphate: step 1/6. Functionally, catalyzes the NADPH-dependent rearrangement and reduction of 1-deoxy-D-xylulose-5-phosphate (DXP) to 2-C-methyl-D-erythritol 4-phosphate (MEP). In Yersinia pseudotuberculosis serotype O:1b (strain IP 31758), this protein is 1-deoxy-D-xylulose 5-phosphate reductoisomerase.